The primary structure comprises 117 residues: Photosystem II reaction center Psb28 protein (117 aa).

Belongs to the Psb28 family. Part of the photosystem II complex.

It is found in the cellular thylakoid membrane. This chain is Photosystem II reaction center Psb28 protein, found in Prochlorococcus marinus subsp. pastoris (strain CCMP1986 / NIES-2087 / MED4).